The following is a 955-amino-acid chain: MMNLGSLSLSTSKSSKPMVSISFWIPYFTHWGESLLVCGSAPGLGSGNVKKGLLLKPSQQDDQLIWSGSVSVPPGFSSDYCYYVVDDSKSVLRSEFGMKRKLVVPETLTGGESVHLRDLWQSGDQALPFRSAFKDVIFHHSFDVKVEKPLGVFMNKSDQDDSVVVQFKICCPDIGEGTSVYVLGTPEKLGNWKVENGLRLNYVDDSIWEADCLIPKADFPIKYRYCKVQKEDSIGFESGGNRELSLHSIGSKQEYIVMSDGLFRAMPWRGAGVAVPMFSVRSEDDVGVGEFLDLKLLVDWAVDSGLHLVQLLPVNDTSVHKMWWDSYPYSSLSVFALHPLYLRVQALSERLPEDIKEEIQKAKNQLDKNDVDYEATMETKLSIAKKIFDIEKDQTLNSSTFQKFFSENEGWLKPYAAFCFLRDFFETSDHSQWGTFSDYTDDKLEKLISKDNLHYNTICFHYYIQYHLHVQLSAAAEYARKKGVVLKGDLPIGVDRNSVDTWVYRNLFRMNTSTGAPPDYFDKNGQNWGFPTYNWEEMSKDNYAWWRARLTQMGKYFTAYRIDHILGFFRIWELPAHAMTGLVGKFRPSIPLSQEELEKEGIWDFDRLSKPYIQKKFLEEKFGDFWPFIASNFLNETQKDMYEFKEDCNTEKKIVAKLKSLAEKSLLLENEDKVRRDVFDILRNVVLIKDPEDARKFYPRFNIEDTSSFQDLDDHSKNVLKRLYYDYYFQRQEDLWRKNALKTLPALLNSSNMLACGEDLGLIPSCVHPVMQELGLVGLRIQRMPSESDVKFGIPSNYDYMTVCAPSCHDCSTLRAWWEEDEERRQQYFKEVIGVDGIPPSQCIPEITHFILRQHVEAPSMWAIFPLQDMMALKEEYTTRPATEETINDPTNPKHYWRYRVHVTLDSLLKDTDLKSTIKNLVSSSGRSVPANVSGEDINKSRGEVIANGSTKPNP.

M1 is subject to N-acetylmethionine. CBM20 domains lie at 13 to 122 (KSSK…LWQS) and 157 to 270 (SDQD…PWRG). Residues 925–955 (SGRSVPANVSGEDINKSRGEVIANGSTKPNP) are disordered.

It belongs to the disproportionating enzyme family.

The protein resides in the cytoplasm. The protein localises to the cytosol. It catalyses the reaction Transfers a segment of a (1-&gt;4)-alpha-D-glucan to a new position in an acceptor, which may be glucose or a (1-&gt;4)-alpha-D-glucan.. With respect to regulation, inactivated in response to cold stress. Cytosolic alpha-glucanotransferase essential for the cytosolic metabolism of maltose, an intermediate on the pathway by which starch is converted to sucrose in leaves at night. Metabolizes maltose exported from the chloroplast and is specific for beta-maltose. May play a role in freezing tolerance. Temperature drop induces inactivation of DPE2 that leads to rapid accumulation of maltose, a solute that protects cells from freezing damage. The protein is 4-alpha-glucanotransferase DPE2 (DPE2) of Arabidopsis thaliana (Mouse-ear cress).